A 447-amino-acid chain; its full sequence is Probable ribonuclease FAU-1 (447 aa).

The interval 424–447 (PEAPGGKICTPEGLTSAPPRSSSA) is disordered.

Belongs to the FAU-1 family.

Probable RNase involved in rRNA stability through maturation and/or degradation of precursor rRNAs. Binds to RNA in loop regions with AU-rich sequences. This chain is Probable ribonuclease FAU-1, found in Pyrobaculum neutrophilum (strain DSM 2338 / JCM 9278 / NBRC 100436 / V24Sta) (Thermoproteus neutrophilus).